Consider the following 740-residue polypeptide: 1,4-alpha-glucan branching enzyme GlgB (740 aa).

Aspartate 419 acts as the Nucleophile in catalysis. The active-site Proton donor is glutamate 472.

This sequence belongs to the glycosyl hydrolase 13 family. GlgB subfamily. Monomer.

The catalysed reaction is Transfers a segment of a (1-&gt;4)-alpha-D-glucan chain to a primary hydroxy group in a similar glucan chain.. It participates in glycan biosynthesis; glycogen biosynthesis. In terms of biological role, catalyzes the formation of the alpha-1,6-glucosidic linkages in glycogen by scission of a 1,4-alpha-linked oligosaccharide from growing alpha-1,4-glucan chains and the subsequent attachment of the oligosaccharide to the alpha-1,6 position. This Paramagnetospirillum magneticum (strain ATCC 700264 / AMB-1) (Magnetospirillum magneticum) protein is 1,4-alpha-glucan branching enzyme GlgB.